A 454-amino-acid polypeptide reads, in one-letter code: MQPPRERLVVTGRAGWMGMGRGAGRSALGLWPTLAFLLCSFPAAISPCKILKCNSEFWSATSSGSHAPASDDVPEFCAALRTYALCTRRTARTCRGDLAYHSAVHGIEDLMSQHNCSKDGPTSQPRVRTLPPAGDSQERSDSPEICHYEKSFHKHSAAPNYTHCGLFGDPHLRTFTDHFQTCKVQGAWPLIDNNYLNVQVTNTPVLPGSAATATSKLTIIFKNFQECVDQKVYQAEMDELPSAFADGSKNGGDKHGANSLKITEKVSGQHVEIQAKYIGTTIVVRQVGRYLTFAVRMPEEVVNAVEDRDSQGLYLCLRGCPLNQQIDFQAFRANAESPRRPAAASPSPVVPETFPYETAVAKCKEKLPVEDLYYQACVFDLLTTGDVNFTLAAYYALEDGKMLHSNKDKLHLFERTRELPGAVAAAAAAATTFPLAPQILLGTIPLLVLLPVLW.

An N-terminal signal peptide occupies residues 1-47 (MQPPRERLVVTGRAGWMGMGRGAGRSALGLWPTLAFLLCSFPAAISP). The propeptide at 48-169 (CKILKCNSEF…NYTHCGLFGD (122 aa)) is removed in mature form. Residues 114-126 (HNCSKDGPTSQPR) are compositionally biased toward polar residues. The interval 114–141 (HNCSKDGPTSQPRVRTLPPAGDSQERSD) is disordered. Residues N115 and N160 are each glycosylated (N-linked (GlcNAc...) asparagine). Cystine bridges form between C146/C227 and C164/C316. N388 carries N-linked (GlcNAc...) asparagine glycosylation. A427 is lipidated: GPI-anchor amidated alanine. Positions 428 to 454 (AAATTFPLAPQILLGTIPLLVLLPVLW) are cleaved as a propeptide — removed in mature form.

It belongs to the repulsive guidance molecule (RGM) family. As to quaternary structure, interacts with NEO1, BMP2 and BMP4. In terms of processing, autocatalytically cleaved at low pH; the two chains remain linked via two disulfide bonds. As to expression, expressed in gradient in periventricular layers of the developing nervous system. In adult, expressed in scattered cells throughout the brain.

Its subcellular location is the cell membrane. Functionally, member of the repulsive guidance molecule (RGM) family that performs several functions in the developing and adult nervous system. Regulates cephalic neural tube closure, inhibits neurite outgrowth and cortical neuron branching, and the formation of mature synapses. Binding to its receptor NEO1/neogenin induces activation of RHOA-ROCK1/Rho-kinase signaling pathway through UNC5B-ARHGEF12/LARG-PTK2/FAK1 cascade, leading to collapse of the neuronal growth cone and neurite outgrowth inhibition. Furthermore, RGMA binding to NEO1/neogenin leads to HRAS inactivation by influencing HRAS-PTK2/FAK1-AKT1 pathway. It also functions as a bone morphogenetic protein (BMP) coreceptor that may signal through SMAD1, SMAD5, and SMAD8. This chain is Repulsive guidance molecule A (Rgma), found in Mus musculus (Mouse).